The chain runs to 339 residues: Lipopolysaccharide 1,2-glucosyltransferase (339 aa).

UDP-binding positions include 35–40 (GIDENY) and 132–133 (DA). Residues Asp-132 and Asp-134 each coordinate Mg(2+). Short sequence motifs (DXD) lie at residues 132 to 134 (DAD) and 219 to 221 (DQD). His-268 provides a ligand contact to Mg(2+). 268-274 (HYTGITK) serves as a coordination point for UDP.

It belongs to the glycosyltransferase 8 family. The cofactor is Mg(2+).

Its subcellular location is the cell inner membrane. The enzyme catalyses UDP-glucose + [lipopolysaccharide] = UDP + D-glucosyl-[lipopolysaccharide].. The protein operates within bacterial outer membrane biogenesis; LPS core biosynthesis. Its function is as follows. Glucosyltransferase involved in the biosynthesis of the core oligosaccharide region of lipopolysaccharide (LPS). Catalyzes the addition of a glucose (glucose II) to the outer-core galactose I. Has a marked preference for its specific donor substrate, but it appears to have a relaxed specificity for alternate LPS acceptor residues, providing the overall size of the acceptor is conserved. The protein is Lipopolysaccharide 1,2-glucosyltransferase of Escherichia coli.